We begin with the raw amino-acid sequence, 604 residues long: Vacuolar protein sorting-associated protein 64 (604 aa).

Residues 1–89 (MVELEKRRRP…SVHQVSQQQQ (89 aa)) form a disordered region. Residues 1–578 (MVELEKRRRP…LGVVEGKRTR (578 aa)) lie on the Cytoplasmic side of the membrane. Over residues 22-34 (DQSNSQGMTKTPE) the composition is skewed to polar residues. Composition is skewed to low complexity over residues 44 to 57 (RARSNSRSSGSRSN) and 77 to 89 (SPPSVHQVSQQQQ). Residues 185–257 (LKLGRPVTNS…NGTFVNGVKI (73 aa)) enclose the FHA domain. Residues 404 to 563 (NLINMIKTLT…EEKKDTEDTL (160 aa)) are a coiled coil. The interval 539-561 (INNDNNAKVKQNDSREEKKDTED) is disordered. A compositionally biased stretch (basic and acidic residues) spans 548–560 (KQNDSREEKKDTE). Residues 579–598 (VSKGMLFGVVAISFGLVATA) form a helical; Anchor for type IV membrane protein membrane-spanning segment. At 599 to 604 (VKQLPQ) the chain is on the lumenal side.

In terms of assembly, component of a complex at least composed of FAR3, FAR7, FAR8, FAR10, FAR11 and VPS64.

The protein resides in the endoplasmic reticulum membrane. Participates in the control of the reentry into the cell cycle following pheromone treatment. Involved in vacuolar protein sorting. The polypeptide is Vacuolar protein sorting-associated protein 64 (VPS64) (Saccharomyces cerevisiae (strain ATCC 204508 / S288c) (Baker's yeast)).